The following is a 177-amino-acid chain: Ribulose bisphosphate carboxylase small subunit, chloroplastic 5 (177 aa).

A chloroplast-targeting transit peptide spans 1–56; it reads MASSMMASTAAVARAGPAQSSMVAPFNGLRSSVAFPATRKANNDLSTLPSNGGRVS.

Belongs to the RuBisCO small chain family. As to quaternary structure, heterohexadecamer of 8 large and 8 small subunits.

The protein resides in the plastid. It is found in the chloroplast. In terms of biological role, ruBisCO catalyzes two reactions: the carboxylation of D-ribulose 1,5-bisphosphate, the primary event in carbon dioxide fixation, as well as the oxidative fragmentation of the pentose substrate. Both reactions occur simultaneously and in competition at the same active site. Although the small subunit is not catalytic it is essential for maximal activity. The polypeptide is Ribulose bisphosphate carboxylase small subunit, chloroplastic 5 (Lemna gibba (Swollen duckweed)).